A 574-amino-acid polypeptide reads, in one-letter code: ATP-grasp enzyme fsqD (574 aa).

The ATP-grasp domain occupies 234 to 462 (NKFLTSKYVG…YWGLAAVLGV (229 aa)). Residue 263 to 318 (ALPYPLIVKPCDGWSSEGVSRVESPDAFPAAVKSIDTSRHGTEFVMEPYCDGPEVD) coordinates ATP. Residues E394, E431, and N433 each coordinate Mg(2+). 3 residues coordinate Mn(2+): E394, E431, and N433.

The cofactor is Mg(2+). It depends on Mn(2+) as a cofactor.

Its pathway is secondary metabolite biosynthesis. In terms of biological role, ATP-grasp enzyme; part of the gene cluster that mediates the biosynthesis of the isoquinoline alkaloids fumisoquin A, fumisoquin B and fumisoquin C; as well as small amounts of fumipyrrole as a shunt metabolite. The products of the cluster lead to a brown coloration and are important for growth and conidiation. The nonribosomal peptide synthetase-like protein fsqF, which lacks a canonical condensation domain, is required for addition of a serine-derived dehydroalanine moiety to activated tyrosine but is not essential for the subsequent steps leading to isoquinoline formation. A different enzyme, most likely the ATP-grasp enzyme fsqD, is responsible for activation of tyrosine. Three additional enzymes encoded by the fsq cluster, the N-methyltransferase fsqC, the phenol 2-monooxygenase fsqG and the FAD-dependent oxidase fsqB, catalyze the formation of the isoquinoline ring system in the fumisoquins. FsqB converts the fspF thiolation domain-bound (2S,4S,5S)-2-amino-6-(3,4-dihydroxyphenyl)-4-hydroxy-5-(methylamino)hexanoyl into isoquinoline. The cyclization most likely proceeds via a two-step mechanism, beginning with FAD-dependent oxidation of the methyl group to an iminium species followed by electrophilic attack on the deprotonated phenol. In Aspergillus fumigatus (strain ATCC MYA-4609 / CBS 101355 / FGSC A1100 / Af293) (Neosartorya fumigata), this protein is ATP-grasp enzyme fsqD.